Consider the following 1451-residue polypeptide: Dual 3',5'-cyclic-AMP and -GMP phosphodiesterase 11 (1451 aa).

5 disordered regions span residues 1–54, 75–100, 125–169, 235–262, and 327–374; these read MGQA…PQIQ, ATTPLQFQPTGRMNTEQGGTGYGGYG, LPAH…QVQQ, GNDVVSSTSPTHANGQTSSSRGGSGATT, and QHHH…GSGG. The segment covering 11–21 has biased composition (basic residues); sequence RGCRYKNKNKS. Low complexity predominate over residues 24 to 45; the sequence is QQQQQQQQQQQQQQQHQQQQQQ. The span at 77–91 shows a compositional bias: polar residues; it reads TPLQFQPTGRMNTEQ. 2 stretches are compositionally biased toward low complexity: residues 135–147 and 160–169; these read SGAAPPSSSNGSS and QQQQQYQVQQ. Residues 235 to 248 show a composition bias toward polar residues; that stretch reads GNDVVSSTSPTHAN. The span at 327–340 shows a compositional bias: basic residues; that stretch reads QHHHNHAHLHHSQH. Low complexity predominate over residues 341-355; that stretch reads SHYQAGGAVGSSSLG. Residues 356-374 are compositionally biased toward gly residues; the sequence is STGGASGAGGAPSLGGSGG. GAF domains lie at 419 to 572 and 604 to 754; these read EVRT…GIGL and TIEH…GMGI. In terms of domain architecture, PDEase spans 783-1107; it reads ATMDEAHRLR…GHWIDLADVV (325 aa). Residue His860 is the Proton donor of the active site. A divalent metal cation-binding residues include His864, His900, Asp901, and Asp1011. 4 disordered regions span residues 1109-1171, 1200-1248, 1268-1305, and 1325-1364; these read TKTS…SNTN, DEQA…TPVS, QTSNQAQTQKQRCKSCDHSRSGLQVRKTSSLRGAQELD, and INNHSHHHNHSHSHNHNHHHHHHHHSHHNHSQHGIGIGSA. 2 stretches are compositionally biased toward low complexity: residues 1142–1171 and 1218–1234; these read ASEAEVAVDSPSEKASVNGSNVANNSSNTN and CRSNSTCSSSTASSCLS. A compositionally biased stretch (polar residues) spans 1268–1277; that stretch reads QTSNQAQTQK. Residues 1328–1355 are compositionally biased toward basic residues; the sequence is HSHHHNHSHSHNHNHHHHHHHHSHHNHS.

This sequence belongs to the cyclic nucleotide phosphodiesterase family. The cofactor is a divalent metal cation. In adults, it is enriched in Malpighian tubules.

It catalyses the reaction 3',5'-cyclic GMP + H2O = GMP + H(+). The catalysed reaction is 3',5'-cyclic AMP + H2O = AMP + H(+). Its function is as follows. Plays a role in signal transduction by regulating the intracellular concentration of cyclic nucleotides cAMP and cGMP. Dual-specificity phosphodiesterase that catalyzes the hydrolysis of both cAMP and cGMP to 5'-AMP and 5'-GMP, respectively. This Drosophila melanogaster (Fruit fly) protein is Dual 3',5'-cyclic-AMP and -GMP phosphodiesterase 11 (Pde11).